Consider the following 204-residue polypeptide: Large ribosomal subunit protein eL15A (204 aa).

The disordered stretch occupies residues 164 to 185 (LTATGKKSRGINKGHKFNNTKA). The span at 169 to 185 (KKSRGINKGHKFNNTKA) shows a compositional bias: basic residues.

This sequence belongs to the eukaryotic ribosomal protein eL15 family. Component of the large ribosomal subunit (LSU). Mature yeast ribosomes consist of a small (40S) and a large (60S) subunit. The 40S small subunit contains 1 molecule of ribosomal RNA (18S rRNA) and 33 different proteins (encoded by 57 genes). The large 60S subunit contains 3 rRNA molecules (25S, 5.8S and 5S rRNA) and 46 different proteins (encoded by 81 genes).

The protein resides in the cytoplasm. Its function is as follows. Component of the ribosome, a large ribonucleoprotein complex responsible for the synthesis of proteins in the cell. The small ribosomal subunit (SSU) binds messenger RNAs (mRNAs) and translates the encoded message by selecting cognate aminoacyl-transfer RNA (tRNA) molecules. The large subunit (LSU) contains the ribosomal catalytic site termed the peptidyl transferase center (PTC), which catalyzes the formation of peptide bonds, thereby polymerizing the amino acids delivered by tRNAs into a polypeptide chain. The nascent polypeptides leave the ribosome through a tunnel in the LSU and interact with protein factors that function in enzymatic processing, targeting, and the membrane insertion of nascent chains at the exit of the ribosomal tunnel. The sequence is that of Large ribosomal subunit protein eL15A from Saccharomyces cerevisiae (strain ATCC 204508 / S288c) (Baker's yeast).